The following is a 749-amino-acid chain: Protein lin-54 homolog (749 aa).

Residue Lys-139 forms a Glycyl lysine isopeptide (Lys-Gly) (interchain with G-Cter in SUMO2) linkage. N6-acetyllysine occurs at positions 244 and 249. Ser-264, Ser-282, Ser-310, and Ser-314 each carry phosphoserine. Lys-357 participates in a covalent cross-link: Glycyl lysine isopeptide (Lys-Gly) (interchain with G-Cter in SUMO2). The 114-residue stretch at 521–634 (PRKPCNCTKS…KCIGCKNFEE (114 aa)) folds into the CRC domain. The segment at 523–536 (KPCNCTKSLCLKLY) is DNA-binding. Zn(2+)-binding residues include Cys-525, Cys-527, Cys-532, Cys-537, Cys-539, Cys-546, Cys-549, Cys-551, and Cys-554. The tract at residues 583 to 596 (IGKGKEGESDRRHS) is linker. Cys-599, Cys-601, Cys-606, Cys-611, Cys-613, Cys-620, Cys-624, Cys-626, and Cys-629 together coordinate Zn(2+). The DNA-binding stretch occupies residues 599-612 (CNCKRSGCLKNYCE). Ser-635 carries the phosphoserine modification. Glycyl lysine isopeptide (Lys-Gly) (interchain with G-Cter in SUMO2) cross-links involve residues Lys-639, Lys-659, and Lys-661.

Belongs to the lin-54 family. Component of the DREAM complex (also named LINC complex) at least composed of E2F4, E2F5, LIN9, LIN37, LIN52, LIN54, MYBL1, MYBL2, RBL1, RBL2, RBBP4, RBL2, TFDP1 and TFDP2. The complex exists in quiescent cells where it represses cell cycle-dependent genes. It dissociates in S phase when LIN9, LIN37, LIN52 and LIN54 form a subcomplex that binds to MYBL2.

The protein localises to the nucleus. Functionally, component of the DREAM complex, a multiprotein complex that can both act as a transcription activator or repressor depending on the context. In G0 phase, the complex binds to more than 800 promoters and is required for repression of E2F target genes. In S phase, the complex selectively binds to the promoters of G2/M genes whose products are required for mitosis and participates in their cell cycle dependent activation. In the complex, acts as a DNA-binding protein that binds the promoter of CDK1 in a sequence-specific manner. Specifically recognizes the consensus motif 5'-TTYRAA-3' in target DNA. This chain is Protein lin-54 homolog (Lin54), found in Rattus norvegicus (Rat).